We begin with the raw amino-acid sequence, 94 residues long: Integration host factor subunit beta (94 aa).

The protein belongs to the bacterial histone-like protein family. Heterodimer of an alpha and a beta chain.

In terms of biological role, this protein is one of the two subunits of integration host factor, a specific DNA-binding protein that functions in genetic recombination as well as in transcriptional and translational control. This chain is Integration host factor subunit beta, found in Buchnera aphidicola subsp. Acyrthosiphon pisum (strain 5A).